The chain runs to 455 residues: Argininosuccinate lyase (455 aa).

It belongs to the lyase 1 family. Argininosuccinate lyase subfamily.

It is found in the cytoplasm. It catalyses the reaction 2-(N(omega)-L-arginino)succinate = fumarate + L-arginine. Its pathway is amino-acid biosynthesis; L-arginine biosynthesis; L-arginine from L-ornithine and carbamoyl phosphate: step 3/3. This Caulobacter sp. (strain K31) protein is Argininosuccinate lyase.